The sequence spans 786 residues: Endonuclease MutS2 (786 aa).

An ATP-binding site is contributed by 335 to 342 (GPNTGGKT). The Smr domain maps to 711-786 (LDLRGERFEN…GLGVTVVELK (76 aa)).

Belongs to the DNA mismatch repair MutS family. MutS2 subfamily. Homodimer. Binds to stalled ribosomes, contacting rRNA.

Its function is as follows. Endonuclease that is involved in the suppression of homologous recombination and thus may have a key role in the control of bacterial genetic diversity. In terms of biological role, acts as a ribosome collision sensor, splitting the ribosome into its 2 subunits. Detects stalled/collided 70S ribosomes which it binds and splits by an ATP-hydrolysis driven conformational change. Acts upstream of the ribosome quality control system (RQC), a ribosome-associated complex that mediates the extraction of incompletely synthesized nascent chains from stalled ribosomes and their subsequent degradation. Probably generates substrates for RQC. The chain is Endonuclease MutS2 from Bacillus cereus (strain B4264).